Reading from the N-terminus, the 2664-residue chain is Non-reducing polyketide synthase sorB (2664 aa).

Residues 21–45 (KSAPQSGNTADDIPNAASQPDTTST) form a disordered region. Over residues 36–45 (AASQPDTTST) the composition is skewed to polar residues. Residues 112 to 281 (ADHARRLAEW…TTPSRIASDL (170 aa)) form an N-terminal acylcarrier protein transacylase domain (SAT) region. Residue cysteine 184 is the Nucleophile; for transacylase activity of the active site. Catalysis depends on histidine 302, which acts as the Proton donor/acceptor; for transacylase activity. The Ketosynthase family 3 (KS3) domain maps to 428-849 (DNDIAVIGMS…GSNASMVIKQ (422 aa)). Catalysis depends on for beta-ketoacyl synthase activity residues cysteine 596, histidine 731, and histidine 772. The interval 961–1276 (CFGGQVSKSV…TQGTRQLADV (316 aa)) is malonyl-CoA:ACP transacylase (MAT) domain. Positions 1345 to 1477 (PGLYTFMGYG…GQLEFHRADD (133 aa)) are N-terminal hotdog fold. The region spanning 1345 to 1663 (PGLYTFMGYG…FSARSMSELF (319 aa)) is the PKS/mFAS DH domain. The tract at residues 1376–1548 (VSGYTLGKTV…PSESAGRAVK (173 aa)) is product template (PT) domain. Residues 1507-1663 (DEVIQGQSIY…FSARSMSELF (157 aa)) form a C-terminal hotdog fold region. Residues 1711 to 1785 (TELWAKLLPV…GILAFLQSTL (75 aa)) enclose the Carrier domain. An O-(pantetheine 4'-phosphoryl)serine modification is found at serine 1745. The segment at 1789–1820 (GEDDASQSSDAASSSRNTPPSSNDGILATPSP) is disordered. Residues 1794 to 1803 (SQSSDAASSS) are compositionally biased toward low complexity. Residues 2015-2197 (FQLMADFLSR…DAGYKHVEWT (183 aa)) are methyltransferase domain. Residues 2281 to 2526 (VTGTTGSLGS…TLRSFPAVEG (246 aa)) are NADPH-binding (R) domain.

The cofactor is pantetheine 4'-phosphate.

It participates in secondary metabolite biosynthesis. Functionally, non-reducing polyketide synthase; part of the gene cluster that mediates the biosynthesis of sorbicillinoids, a diverse group of yellow secondary metabolites that restrict growth of competing pathogenic fungi but not of bacteria. Sorbicillinoids biosynthesis requires the action of two PKSs. SorA iteratively combines three acetyl units and the growing chain is modified by the ketoacyl reductase subunit, and optional by the enoyl reductase subunit in the second cycle. The polyketide is then handed over to the PKS SorB, which adds three more acetyl units, and two methyl groups. SorB releases an aldehyde, which undergoes spontaneous cyclization resulting in the formation of sorbicillin or 2',3'-dihydrosorbicillin. The monooxygenase sorC oxidizes sorbicillin and 2',3'-dihydrosorbicillin to 2',3'-dihydrosorbicillinol and sorbicillinol, respectively. The oxidoreductase sorD further converts sorbicillinol into oxosorbicillinol. Sorbicillinol is the building block for the other sorbicillinoids such as disorbicillinol, bisvertinolon, and dihydrobisvertinolone. This is Non-reducing polyketide synthase sorB from Penicillium rubens (strain ATCC 28089 / DSM 1075 / NRRL 1951 / Wisconsin 54-1255) (Penicillium chrysogenum).